Reading from the N-terminus, the 349-residue chain is N-acetyltaurine hydrolase (349 aa).

6 residues coordinate a divalent metal cation: H26, H28, E169, H201, H230, and D298.

It belongs to the metallo-dependent hydrolases superfamily. Phosphotriesterase family. Requires a divalent metal cation as cofactor.

It localises to the cytoplasm. It is found in the cytosol. The enzyme catalyses N-acetyltaurine + H2O = taurine + acetate. It carries out the reaction N-propanoyltaurine + H2O = propanoate + taurine. The catalysed reaction is N-acetyl-L-methionine + H2O = L-methionine + acetate. It catalyses the reaction N-acetyl-L-isoleucine + H2O = L-isoleucine + acetate. The enzyme catalyses N-acetyl-L-leucine + H2O = L-leucine + acetate. It carries out the reaction N-acetyl-L-valine + H2O = L-valine + acetate. N-acetyltaurine hydrolase that regulates feeding by catalyzing the hydrolysis of N-acetyltaurine into taurine and acetate. N-acetyltaurine has anorexigenic and anti-obesity effects that are dependent on GFRAL receptor and GDF15. PTER also acts on other N-acetyl amino acids (Met, Ile, Leu, Val) and N-propionyltaurine, but at lower rates. This chain is N-acetyltaurine hydrolase, found in Pongo abelii (Sumatran orangutan).